Reading from the N-terminus, the 267-residue chain is Cell division protein FtsQ (267 aa).

Residues 1 to 32 are Cytoplasmic-facing; sequence MRKKTSSNKKNTAKKNNNISLHRKLGLIYKKT. A helical membrane pass occupies residues 33–53; it reads ILILKIVLIIFICLFAFTKYF. The Periplasmic segment spans residues 54-267; the sequence is ASLKSYLKTN…DKNKYYIEKY (214 aa). The region spanning 73–141 is the POTRA domain; sequence FKLENVIIEG…STIYIKLFER (69 aa).

Belongs to the FtsQ/DivIB family. FtsQ subfamily.

It is found in the cell inner membrane. Functionally, essential cell division protein. This is Cell division protein FtsQ from Rickettsia bellii (strain RML369-C).